An 80-amino-acid chain; its full sequence is Waprin-Phi3 (80 aa).

The signal sequence occupies residues 1 to 22 (MKPWILLLLAGLLILSTQLTTA). Residues 31 to 78 (PKVKPGECPKVKIPPDYPCNQYCVWDFDCEGNKKCCPVGCAKECFPPG) form the WAP domain. 4 disulfide bridges follow: Cys-38–Cys-66, Cys-49–Cys-70, Cys-53–Cys-65, and Cys-59–Cys-74.

Belongs to the venom waprin family. Expressed by the venom gland.

It is found in the secreted. Damages membranes of susceptible bacteria. Has no hemolytic activity. Not toxic to mice. Does not inhibit the proteinases elastase and cathepsin G. This is Waprin-Phi3 from Philodryas olfersii (Green snake).